The sequence spans 156 residues: FAD synthase (156 aa).

ATP-binding positions include 16 to 17 (TF), 21 to 24 (HPGH), aspartate 101, and tyrosine 129.

Belongs to the archaeal FAD synthase family. Homodimer. It depends on a divalent metal cation as a cofactor.

It catalyses the reaction FMN + ATP + H(+) = FAD + diphosphate. It participates in cofactor biosynthesis; FAD biosynthesis; FAD from FMN: step 1/1. Catalyzes the transfer of the AMP portion of ATP to flavin mononucleotide (FMN) to produce flavin adenine dinucleotide (FAD) coenzyme. This is FAD synthase from Methanococcus aeolicus (strain ATCC BAA-1280 / DSM 17508 / OCM 812 / Nankai-3).